A 521-amino-acid polypeptide reads, in one-letter code: Medium/long-chain-fatty-acid--[acyl-carrier-protein] ligase MbtM (521 aa).

This sequence belongs to the ATP-dependent AMP-binding enzyme family.

It carries out the reaction a long-chain fatty acid + holo-[ACP] + ATP = a long-chain fatty acyl-[ACP] + AMP + diphosphate. It catalyses the reaction a medium-chain fatty acid + holo-[ACP] + ATP = a medium-chain fatty acyl-[ACP] + AMP + diphosphate. The protein operates within siderophore biosynthesis; mycobactin biosynthesis. Its function is as follows. Activates lipidic moieties required for mycobactin biosynthesis. Converts medium- to long-chain aliphatic fatty acids into acyl adenylate, which is further transferred on to the phosphopantetheine arm of the carrier protein MbtL. The polypeptide is Medium/long-chain-fatty-acid--[acyl-carrier-protein] ligase MbtM (mbtM) (Mycobacterium sp. (strain MCS)).